The sequence spans 624 residues: Bifunctional protein ArgH (624 aa).

The tract at residues 1–466 is argininosuccinate lyase; that stretch reads MALWGGRFTQ…AARDTTLVKV (466 aa). One can recognise an N-acetyltransferase domain in the interval 464–614; the sequence is VKVRPARITD…DEVALEFNLS (151 aa). Positions 467–624 are probable acetyltransferase; the sequence is RPARITDIET…EQIISQVKVA (158 aa).

This sequence in the N-terminal section; belongs to the lyase 1 family. Argininosuccinate lyase subfamily.

Its subcellular location is the cytoplasm. It catalyses the reaction 2-(N(omega)-L-arginino)succinate = fumarate + L-arginine. It participates in amino-acid biosynthesis; L-arginine biosynthesis; L-arginine from L-ornithine and carbamoyl phosphate: step 3/3. The sequence is that of Bifunctional protein ArgH (argH) from Vibrio vulnificus (strain CMCP6).